The following is a 79-amino-acid chain: Conotoxin VnMKLT1-01122 (79 aa).

Residues 1–22 (MKLTCMKIVAVLFLTAWTFVTA) form the signal peptide. A propeptide spanning residues 23-48 (DDSRNGLEYLFPKAHYEMNPEASKLN) is cleaved from the precursor. The residue at position 51 (Gln-51) is a Pyrrolidone carboxylic acid. Disulfide bonds link Cys-53/Cys-70, Cys-60/Cys-74, and Cys-69/Cys-78.

Belongs to the conotoxin O1 superfamily. In terms of tissue distribution, expressed by the venom duct.

It localises to the secreted. In Conus ventricosus (Mediterranean cone), this protein is Conotoxin VnMKLT1-01122.